The following is a 432-amino-acid chain: Calcium uptake protein 2, mitochondrial (432 aa).

A mitochondrion-targeting transit peptide spans 1–22; it reads MAAAAGRSAWLAAWGGRLRRGL. Residues 169 to 204 enclose the EF-hand 1 domain; the sequence is KPHSGFHVAFKMLDVDGNEMIERKEFVKLQKIISKQ. Ca(2+) is bound by residues D182, D184, N186, M188, E190, and E193. A Phosphoserine modification is found at S202. The 36-residue stretch at 224–259 folds into the EF-hand 2; degenerate domain; it reads EPGVNTTLQVRFFGKRGEKKLHYKEFRRFMENLQTE. An EF-hand 3; degenerate domain is found at 290–325; that stretch reads TENKDIYWRNVREKLSVGESISLDEFKSFCHFTTHL. Residues 359–394 enclose the EF-hand 4 domain; it reads LSDNLLDTVFKIFDLDGDECLSHGEFLGVLKNRMHR. Positions 372, 374, 376, 378, and 383 each coordinate Ca(2+).

This sequence belongs to the MICU1 family. MICU2 subfamily. As to quaternary structure, heterodimer; disulfide-linked; heterodimerizes with MICU1. Component of the uniplex complex, composed of MCU, EMRE/SMDT1, MICU1 and MICU2 in a 4:4:1:1 stoichiometry. Predominantly expressed in stomach, intestine, skeletal muscle, kidney, heart, testis, prostate and uterus.

The protein resides in the mitochondrion intermembrane space. Its subcellular location is the mitochondrion inner membrane. Calcium sensor of the mitochondrial calcium uniporter (MCU) channel, which senses calcium level via its EF-hand domains. MICU1 and MICU2 form a disulfide-linked heterodimer that stimulates and inhibits MCU activity, depending on the concentration of calcium. At low calcium levels, MICU1 occludes the pore of the MCU channel, preventing mitochondrial calcium uptake. At higher calcium levels, calcium-binding to MICU1 and MICU2 induces a conformational change that weakens MCU-MICU1 interactions and moves the MICU1-MICU2 heterodimer away from the pore, allowing calcium permeation through the MCU channel. The polypeptide is Calcium uptake protein 2, mitochondrial (Mus musculus (Mouse)).